A 351-amino-acid polypeptide reads, in one-letter code: UDP-N-acetylenolpyruvoylglucosamine reductase (351 aa).

The region spanning 11–213 (GVGGSIACFI…KQVRDQVLRI (203 aa)) is the FAD-binding PCMH-type domain. The active site involves Arg158. Catalysis depends on Ser239, which acts as the Proton donor. Glu343 is an active-site residue.

Belongs to the MurB family. FAD serves as cofactor.

It is found in the cytoplasm. It catalyses the reaction UDP-N-acetyl-alpha-D-muramate + NADP(+) = UDP-N-acetyl-3-O-(1-carboxyvinyl)-alpha-D-glucosamine + NADPH + H(+). It functions in the pathway cell wall biogenesis; peptidoglycan biosynthesis. Its function is as follows. Cell wall formation. The polypeptide is UDP-N-acetylenolpyruvoylglucosamine reductase (Tropheryma whipplei (strain TW08/27) (Whipple's bacillus)).